Reading from the N-terminus, the 346-residue chain is Formimidoylglutamase (346 aa).

Mn(2+) is bound by residues His145, Asp180, His182, Asp184, Asp271, and Asp273.

This sequence belongs to the arginase family. It depends on Mn(2+) as a cofactor.

It catalyses the reaction N-formimidoyl-L-glutamate + H2O = formamide + L-glutamate. It functions in the pathway amino-acid degradation; L-histidine degradation into L-glutamate; L-glutamate from N-formimidoyl-L-glutamate (hydrolase route): step 1/1. In terms of biological role, catalyzes the conversion of N-formimidoyl-L-glutamate to L-glutamate and formamide. This is Formimidoylglutamase from Psychrobacter cryohalolentis (strain ATCC BAA-1226 / DSM 17306 / VKM B-2378 / K5).